Reading from the N-terminus, the 101-residue chain is A-type ATP synthase subunit F (101 aa).

The protein belongs to the V-ATPase F subunit family. Has multiple subunits with at least A(3), B(3), C, D, E, F, H, I and proteolipid K(x).

It is found in the cell membrane. Functionally, component of the A-type ATP synthase that produces ATP from ADP in the presence of a proton gradient across the membrane. The sequence is that of A-type ATP synthase subunit F from Methanosarcina acetivorans (strain ATCC 35395 / DSM 2834 / JCM 12185 / C2A).